Reading from the N-terminus, the 1228-residue chain is Serine/threonine-protein kinase CST20 (1228 aa).

Residues 1-18 show a composition bias toward polar residues; it reads MSILSENNPTQTSITDPN. 2 disordered regions span residues 1-382 and 405-468; these read MSIL…TAHN and NSTN…HSQE. 2 stretches are compositionally biased toward low complexity: residues 57–70 and 95–123; these read NTTSANTSSLSLGS and ESGSSDIDDSQQSHNNNNNNNNNESNPES. The span at 148 to 159 shows a compositional bias: basic and acidic residues; sequence HQGDDSDNEKQY. 3 stretches are compositionally biased toward polar residues: residues 173–195, 205–222, and 232–244; these read DSYSPGTLESPGTLNALETNNVS, TSSLEDLSLSLQHQNENA, and PQVSTSKTSSFHD. The segment covering 246-255 has biased composition (low complexity); sequence SSVISSSTSV. Composition is skewed to polar residues over residues 260–275 and 309–328; these read SNPTSTRGSHLSSYKS and DTLSSATNSPNLLRNDTLQG. Over residues 347–367 the composition is skewed to low complexity; sequence NTSATSRNTSGTSTSTVVKNS. Polar residues predominate over residues 368–382; the sequence is RSGTSKLTSTSTAHN. The segment covering 437 to 466 has biased composition (low complexity); it reads KVRGVFSSMFGKNKSTSSSSSSNSGSNSHS. The 14-residue stretch at 473-486 folds into the CRIB domain; that stretch reads ISTPFNAKHLAHVG. 2 disordered regions span residues 543 to 829 and 865 to 917; these read FHFD…ALAD and LREK…KQAA. The segment covering 548-559 has biased composition (polar residues); that stretch reads NKSSSSGWSNEN. The segment covering 568–579 has biased composition (gly residues); the sequence is SNSGSGGGGGGA. Residues 602 to 611 show a composition bias toward polar residues; sequence ITPSQSMPTK. The span at 612–626 shows a compositional bias: basic and acidic residues; the sequence is TESKQSENQHPHEDN. The span at 627–640 shows a compositional bias: polar residues; the sequence is ATQYTPRTPTSHVQ. Composition is skewed to low complexity over residues 668–681, 693–708, and 734–747; these read PSSQSLPRSDSQSD, ISPSKIKIRSISSKSL, and SIPKSKSHSASLSS. Positions 748–759 are enriched in polar residues; sequence QLRPATNGSTTA. The span at 787–805 shows a compositional bias: pro residues; sequence APPPPPSASPAPPVPPAPP. The span at 809 to 824 shows a compositional bias: polar residues; that stretch reads LSEQTSEIPQQRTAPS. The segment covering 865–874 has biased composition (basic and acidic residues); sequence LREKNERQNR. The segment covering 875–890 has biased composition (polar residues); it reads QQETGQNNADTASGGS. One can recognise a Protein kinase domain in the interval 951-1203; the sequence is YVDLVKIGQG…ADELLHDNFI (253 aa). ATP-binding positions include 957-965 and Lys-981; that span reads IGQGASGGV. Asp-1071 acts as the Proton acceptor in catalysis.

The protein belongs to the protein kinase superfamily. STE Ser/Thr protein kinase family. STE20 subfamily.

It localises to the cytoplasm. The protein localises to the nucleus. It carries out the reaction L-seryl-[protein] + ATP = O-phospho-L-seryl-[protein] + ADP + H(+). The catalysed reaction is L-threonyl-[protein] + ATP = O-phospho-L-threonyl-[protein] + ADP + H(+). Its function is as follows. MAP4K component of the MAPK pathway required for the mating pheromone response, and the regulation of cell polarity and cell cycle. Phosphorylates histone H2B to form H2BS10ph. Required for hyphal formation and virulence. In Candida albicans (strain SC5314 / ATCC MYA-2876) (Yeast), this protein is Serine/threonine-protein kinase CST20 (CST20).